The following is a 333-amino-acid chain: Ketol-acid reductoisomerase (NADP(+)) (333 aa).

The 181-residue stretch at 2-182 (ANIYYDDSCD…GGGRAGILET (181 aa)) folds into the KARI N-terminal Rossmann domain. NADP(+)-binding positions include 25-28 (YGSQ), Arg48, Ser51, Ser53, and 83-86 (DTIQ). The active site involves His108. NADP(+) is bound at residue Gly134. One can recognise a KARI C-terminal knotted domain in the interval 183–331 (SFREETETDL…TKLRSMMKWL (149 aa)). Positions 191, 195, 227, and 231 each coordinate Mg(2+). Ser252 is a binding site for substrate.

The protein belongs to the ketol-acid reductoisomerase family. Mg(2+) is required as a cofactor.

The catalysed reaction is (2R)-2,3-dihydroxy-3-methylbutanoate + NADP(+) = (2S)-2-acetolactate + NADPH + H(+). It catalyses the reaction (2R,3R)-2,3-dihydroxy-3-methylpentanoate + NADP(+) = (S)-2-ethyl-2-hydroxy-3-oxobutanoate + NADPH + H(+). The protein operates within amino-acid biosynthesis; L-isoleucine biosynthesis; L-isoleucine from 2-oxobutanoate: step 2/4. It participates in amino-acid biosynthesis; L-valine biosynthesis; L-valine from pyruvate: step 2/4. In terms of biological role, involved in the biosynthesis of branched-chain amino acids (BCAA). Catalyzes an alkyl-migration followed by a ketol-acid reduction of (S)-2-acetolactate (S2AL) to yield (R)-2,3-dihydroxy-isovalerate. In the isomerase reaction, S2AL is rearranged via a Mg-dependent methyl migration to produce 3-hydroxy-3-methyl-2-ketobutyrate (HMKB). In the reductase reaction, this 2-ketoacid undergoes a metal-dependent reduction by NADPH to yield (R)-2,3-dihydroxy-isovalerate. This Leptospira biflexa serovar Patoc (strain Patoc 1 / Ames) protein is Ketol-acid reductoisomerase (NADP(+)).